The primary structure comprises 194 residues: Lachesicidin (194 aa).

Residues M1 to A22 form the signal peptide. The propeptide occupies H23–V160. 2 disulfides stabilise this stretch: C79–C90 and C101–C118. Residues E125–K154 are compositionally biased toward acidic residues. Positions E125 to P157 are disordered.

It belongs to the cathelicidin family. In terms of tissue distribution, expressed by the venom gland.

Its subcellular location is the secreted. The protein resides in the target cell membrane. In terms of biological role, potent antimicrobial peptide against Gram-negative and Gram-positive bacteria. Adopts an amphipathic alpha helical conformation, that may allow to partition into the target membrane. Low hemolytic activities have been observed on mammalian cells. This chain is Lachesicidin, found in Lachesis muta rhombeata (Bushmaster).